A 691-amino-acid chain; its full sequence is DNA ligase (691 aa).

NAD(+)-binding positions include D36 to D40, S85 to L86, and E118. The N6-AMP-lysine intermediate role is filled by K120. The NAD(+) site is built by R141, E178, K295, and K319. Zn(2+) contacts are provided by C413, C416, C431, and C437. The BRCT domain occupies G595–P684.

It belongs to the NAD-dependent DNA ligase family. LigA subfamily. The cofactor is Mg(2+). Mn(2+) serves as cofactor.

The catalysed reaction is NAD(+) + (deoxyribonucleotide)n-3'-hydroxyl + 5'-phospho-(deoxyribonucleotide)m = (deoxyribonucleotide)n+m + AMP + beta-nicotinamide D-nucleotide.. Functionally, DNA ligase that catalyzes the formation of phosphodiester linkages between 5'-phosphoryl and 3'-hydroxyl groups in double-stranded DNA using NAD as a coenzyme and as the energy source for the reaction. It is essential for DNA replication and repair of damaged DNA. The polypeptide is DNA ligase (Chromohalobacter salexigens (strain ATCC BAA-138 / DSM 3043 / CIP 106854 / NCIMB 13768 / 1H11)).